The primary structure comprises 538 residues: Putative outer membrane porin BglH (538 aa).

Residues 1 to 25 (MFRRNLITSAILLMAPLAFSAQSLA) form the signal peptide. The segment at 52 to 82 (KDEEKKKYTPATVNRSVSTNDQGYAANPFPT) is disordered. The segment covering 62–73 (ATVNRSVSTNDQ) has biased composition (polar residues).

The protein belongs to the porin LamB (TC 1.B.3) family.

It localises to the cell outer membrane. Its function is as follows. May be a sugar porin with a broad carbohydrate specificity. This chain is Putative outer membrane porin BglH (bglH), found in Escherichia coli O139:H28 (strain E24377A / ETEC).